Here is a 170-residue protein sequence, read N- to C-terminus: Double homeobox protein 1 (170 aa).

2 consecutive DNA-binding regions (homeobox) follow at residues 19-78 (GRRM…LRQH) and 94-153 (GRRK…RGQS). The interval 75-100 (LRQHRRQSRPWPGRRDPQKGRRKRTA) is disordered.

Belongs to the paired homeobox family. Expressed in rhabdomyosarcoma TE671 cells as well as in several other normal and cancer cells.

The protein resides in the nucleus. Functionally, probable transcription activator. Binds the P5 DNA element sequence 5'-GATCTGAGTCTAATTGAGAATTACTGTAC-3'. This is Double homeobox protein 1 (DUX1) from Homo sapiens (Human).